The following is a 406-amino-acid chain: GTPase Obg (406 aa).

The region spanning 1–159 is the Obg domain; it reads MKFVDEVSIH…RDLKLELKVL (159 aa). The disordered stretch occupies residues 127–148; sequence NTRFKSSTNRAPRQTTPGKPGE. Over residues 129–143 the composition is skewed to polar residues; sequence RFKSSTNRAPRQTTP. Residues 160–334 enclose the OBG-type G domain; that stretch reads ADVGLLGLPN…LSQDIMRYLD (175 aa). GTP is bound by residues 166-173, 191-195, 213-216, 283-286, and 315-317; these read GLPNAGKS, FTTLV, DIPG, NKMD, and SAL. Mg(2+) contacts are provided by Ser173 and Thr193. The segment at 382-406 is disordered; that stretch reads AGAVDDDDFDDEEDDGDGPEIFYVP. Residues 385–399 show a composition bias toward acidic residues; it reads VDDDDFDDEEDDGDG.

It belongs to the TRAFAC class OBG-HflX-like GTPase superfamily. OBG GTPase family. Monomer. Requires Mg(2+) as cofactor.

It is found in the cytoplasm. In terms of biological role, an essential GTPase which binds GTP, GDP and possibly (p)ppGpp with moderate affinity, with high nucleotide exchange rates and a fairly low GTP hydrolysis rate. Plays a role in control of the cell cycle, stress response, ribosome biogenesis and in those bacteria that undergo differentiation, in morphogenesis control. The polypeptide is GTPase Obg (Pseudomonas aeruginosa (strain LESB58)).